Here is a 424-residue protein sequence, read N- to C-terminus: Satellite RNA 48 kDa protein (424 aa).

The segment at 51-83 (PRDGGGRKRKADGSQGRPSNNPGRPSRKWTEKT) is disordered.

It belongs to the nepovirus satellite RNA 48 kDa protein family.

This chain is Satellite RNA 48 kDa protein, found in Tomato black ring virus (strain L) (TBRV).